Reading from the N-terminus, the 424-residue chain is MLRDQQIFDLIIEEQDRQIHGLELIASENFVSDQVMEAAGSVLTNKYAEGYPGKRYYGGCEVVDVIEQIAIDRAKDLFGAEYANVQPHSGSQANTAVFAACLKPGDTILGFDLSHGGHLTHGSPVNFSGKLYNPTFYGVEPETGMLNYDKIQEIATKEQPKLIIAGASAYSRDMDFERFRKIADSVGAILMADISHPAGLIAKGLMNDPIPHCHIITTTTHKTLRGPRGGLIMMGKDFENPWGLKTPKGEIRMMSHVLDMSVFPGNQGGPLEHIIAAKAVAFGEALTDEFFRYAMQVQKNAKAMAAAFVKRDYHIISGGTDNHMMLIDLRNKNISGKEAENALVKAEITVNKNMVPFDDKSPFVTSGIRVGTPAITTRGLLEEDMETIVAFIDKVIMNHTNEEILEEVADAVNEMMGERAIFVF.

(6S)-5,6,7,8-tetrahydrofolate is bound by residues leucine 113 and 117-119; that span reads GHL. Lysine 222 is subject to N6-(pyridoxal phosphate)lysine. A (6S)-5,6,7,8-tetrahydrofolate-binding site is contributed by 361–363; it reads SPF.

Belongs to the SHMT family. As to quaternary structure, homodimer. Pyridoxal 5'-phosphate is required as a cofactor.

The protein resides in the cytoplasm. The catalysed reaction is (6R)-5,10-methylene-5,6,7,8-tetrahydrofolate + glycine + H2O = (6S)-5,6,7,8-tetrahydrofolate + L-serine. It functions in the pathway one-carbon metabolism; tetrahydrofolate interconversion. It participates in amino-acid biosynthesis; glycine biosynthesis; glycine from L-serine: step 1/1. In terms of biological role, catalyzes the reversible interconversion of serine and glycine with tetrahydrofolate (THF) serving as the one-carbon carrier. This reaction serves as the major source of one-carbon groups required for the biosynthesis of purines, thymidylate, methionine, and other important biomolecules. Also exhibits THF-independent aldolase activity toward beta-hydroxyamino acids, producing glycine and aldehydes, via a retro-aldol mechanism. This chain is Serine hydroxymethyltransferase, found in Flavobacterium psychrophilum (strain ATCC 49511 / DSM 21280 / CIP 103535 / JIP02/86).